A 616-amino-acid polypeptide reads, in one-letter code: Membrane protein insertase YidC (616 aa).

Residues 9–29 (ILAVILSGLVLIAWQYFYNVP) form a helical membrane-spanning segment. A disordered region spans residues 37 to 80 (QQQAQAELQKTTPQPTASATPGATPQSGGAAQPSTPAAGQQAQP). The span at 44–71 (LQKTTPQPTASATPGATPQSGGAAQPST) shows a compositional bias: polar residues. 4 helical membrane-spanning segments follow: residues 388–408 (FFGNFGISILLVTVIVKLLFF), 462–482 (LPVVIQIPVFFSLYKVLFVTI), 520–540 (VFGHYLALGIWPIIMGITMWF), and 559–579 (WMPLIFTFMLAGFPAGLVIYW).

Belongs to the OXA1/ALB3/YidC family. Type 1 subfamily. As to quaternary structure, interacts with the Sec translocase complex via SecD. Specifically interacts with transmembrane segments of nascent integral membrane proteins during membrane integration.

It localises to the cell inner membrane. Functionally, required for the insertion and/or proper folding and/or complex formation of integral membrane proteins into the membrane. Involved in integration of membrane proteins that insert both dependently and independently of the Sec translocase complex, as well as at least some lipoproteins. Aids folding of multispanning membrane proteins. The chain is Membrane protein insertase YidC from Bradyrhizobium diazoefficiens (strain JCM 10833 / BCRC 13528 / IAM 13628 / NBRC 14792 / USDA 110).